Reading from the N-terminus, the 677-residue chain is Methionine--tRNA ligase (677 aa).

The short motif at 15–25 is the 'HIGH' region element; sequence PYANGSIHLGH. Positions 146, 149, 159, and 162 each coordinate Zn(2+). Residues 333–337 carry the 'KMSKS' region motif; sequence KMSKS. Lys336 serves as a coordination point for ATP. The tRNA-binding domain occupies 575–677; that stretch reads DFAKVDLRVA…AGAKPGHQVK (103 aa).

It belongs to the class-I aminoacyl-tRNA synthetase family. MetG type 1 subfamily. Homodimer. Requires Zn(2+) as cofactor.

The protein localises to the cytoplasm. It carries out the reaction tRNA(Met) + L-methionine + ATP = L-methionyl-tRNA(Met) + AMP + diphosphate. Is required not only for elongation of protein synthesis but also for the initiation of all mRNA translation through initiator tRNA(fMet) aminoacylation. This chain is Methionine--tRNA ligase, found in Escherichia coli O81 (strain ED1a).